The chain runs to 1591 residues: Mediator of RNA polymerase II transcription subunit 12 (1591 aa).

Disordered stretches follow at residues 1–116, 132–176, and 1488–1530; these read MIPH…LSWR, GAGE…AAGL, and NATL…SLGV. Residues 40 to 53 are compositionally biased toward polar residues; sequence EQSSMPAPQPQTGP. Positions 66–80 are enriched in basic and acidic residues; it reads AQEREHPAKRLRLDI. Residues 99-108 are compositionally biased toward low complexity; that stretch reads PKSTPVSTSS. The segment covering 151-162 has biased composition (pro residues); it reads LSPPSFPAPPWK. Low complexity predominate over residues 1496-1512; it reads PSPAASGSTPAPTPSGS.

It belongs to the Mediator complex subunit 12 family. In terms of assembly, component of the srb8-11 complex, which itself associates with the Mediator complex.

The protein resides in the nucleus. Its function is as follows. Component of the srb8-11 complex. The srb8-11 complex is a regulatory module of the Mediator complex which is itself involved in regulation of basal and activated RNA polymerase II-dependent transcription. The srb8-11 complex may be involved in the transcriptional repression of a subset of genes regulated by Mediator. It may inhibit the association of the Mediator complex with RNA polymerase II to form the holoenzyme complex. This is Mediator of RNA polymerase II transcription subunit 12 (srb8) from Aspergillus clavatus (strain ATCC 1007 / CBS 513.65 / DSM 816 / NCTC 3887 / NRRL 1 / QM 1276 / 107).